Here is a 638-residue protein sequence, read N- to C-terminus: Chaperone protein DnaK (638 aa).

The residue at position 200 (Thr200) is a Phosphothreonine; by autocatalysis. The disordered stretch occupies residues 598–621; it reads SLHMAATAEQQSGSTGAGAGASAK.

The protein belongs to the heat shock protein 70 family.

In terms of biological role, acts as a chaperone. The protein is Chaperone protein DnaK of Xylella fastidiosa (strain M23).